The sequence spans 145 residues: D-aminoacyl-tRNA deacylase (145 aa).

A Gly-cisPro motif, important for rejection of L-amino acids motif is present at residues 137-138 (GP).

This sequence belongs to the DTD family. Homodimer.

It is found in the cytoplasm. It catalyses the reaction glycyl-tRNA(Ala) + H2O = tRNA(Ala) + glycine + H(+). The enzyme catalyses a D-aminoacyl-tRNA + H2O = a tRNA + a D-alpha-amino acid + H(+). An aminoacyl-tRNA editing enzyme that deacylates mischarged D-aminoacyl-tRNAs. Also deacylates mischarged glycyl-tRNA(Ala), protecting cells against glycine mischarging by AlaRS. Acts via tRNA-based rather than protein-based catalysis; rejects L-amino acids rather than detecting D-amino acids in the active site. By recycling D-aminoacyl-tRNA to D-amino acids and free tRNA molecules, this enzyme counteracts the toxicity associated with the formation of D-aminoacyl-tRNA entities in vivo and helps enforce protein L-homochirality. This chain is D-aminoacyl-tRNA deacylase, found in Pseudomonas putida (strain ATCC 700007 / DSM 6899 / JCM 31910 / BCRC 17059 / LMG 24140 / F1).